A 300-amino-acid polypeptide reads, in one-letter code: Ribosomal protein bS6--L-glutamate ligase (300 aa).

The ATP-grasp domain occupies 104–287 (MQLLARQGID…IAGKMIRWIE (184 aa)). Residues Lys141, 178–179 (EY), Asp187, and 211–213 (RSN) each bind ATP. Mg(2+)-binding residues include Asp248, Glu260, and Asn262. Mn(2+)-binding residues include Asp248, Glu260, and Asn262.

Belongs to the RimK family. Mg(2+) serves as cofactor. It depends on Mn(2+) as a cofactor.

Its function is as follows. An L-glutamate ligase that catalyzes the ATP-dependent post-translational addition of glutamate residues to the C-terminus of ribosomal protein bS6 (RpsF). Is also able to catalyze the synthesis of poly-alpha-glutamate in vitro, via ATP hydrolysis from unprotected glutamate as substrate. The number of glutamate residues added to either RpsF or to poly-alpha-glutamate changes with pH. This chain is Ribosomal protein bS6--L-glutamate ligase, found in Shigella flexneri serotype 5b (strain 8401).